We begin with the raw amino-acid sequence, 838 residues long: Periplasmic nitrate reductase (838 aa).

Positions 1-29 (MKVSRRAFIKQTAAAATASVAGVTLPAGA) form a signal peptide, tat-type signal. Residues 41–97 (LKWSKAPCRFCGTGCGVEVAVKDNRVVATQGDPKAEVNRGLNCVKGYFLSKIMYGKD) enclose the 4Fe-4S Mo/W bis-MGD-type domain. Positions 48, 51, 55, and 83 each coordinate [4Fe-4S] cluster. Mo-bis(molybdopterin guanine dinucleotide) is bound by residues Lys85, Gln152, Asn177, Cys181, 214–221 (WGSNMAEM), 245–249 (STFTH), Met382, Gln386, Asn492, 518–519 (SD), Lys541, Asp568, and 728–737 (TGRVLEHWHS). Trp804 is a substrate binding site. Positions 812 and 829 each coordinate Mo-bis(molybdopterin guanine dinucleotide).

The protein belongs to the prokaryotic molybdopterin-containing oxidoreductase family. NasA/NapA/NarB subfamily. In terms of assembly, component of the periplasmic nitrate reductase NapAB complex composed of NapA and NapB. The cofactor is [4Fe-4S] cluster. It depends on Mo-bis(molybdopterin guanine dinucleotide) as a cofactor. In terms of processing, predicted to be exported by the Tat system. The position of the signal peptide cleavage has not been experimentally proven.

The protein localises to the periplasm. The enzyme catalyses 2 Fe(II)-[cytochrome] + nitrate + 2 H(+) = 2 Fe(III)-[cytochrome] + nitrite + H2O. Its function is as follows. Catalytic subunit of the periplasmic nitrate reductase complex NapAB. Receives electrons from NapB and catalyzes the reduction of nitrate to nitrite. This chain is Periplasmic nitrate reductase, found in Ralstonia pickettii (strain 12J).